Consider the following 237-residue polypeptide: Ribonuclease PH (237 aa).

Residues Arg86 and Gly124–Arg126 contribute to the phosphate site.

Belongs to the RNase PH family. In terms of assembly, homohexameric ring arranged as a trimer of dimers.

It catalyses the reaction tRNA(n+1) + phosphate = tRNA(n) + a ribonucleoside 5'-diphosphate. In terms of biological role, phosphorolytic 3'-5' exoribonuclease that plays an important role in tRNA 3'-end maturation. Removes nucleotide residues following the 3'-CCA terminus of tRNAs; can also add nucleotides to the ends of RNA molecules by using nucleoside diphosphates as substrates, but this may not be physiologically important. Probably plays a role in initiation of 16S rRNA degradation (leading to ribosome degradation) during starvation. The protein is Ribonuclease PH of Bradyrhizobium diazoefficiens (strain JCM 10833 / BCRC 13528 / IAM 13628 / NBRC 14792 / USDA 110).